The primary structure comprises 323 residues: tRNA U34 carboxymethyltransferase (323 aa).

Carboxy-S-adenosyl-L-methionine contacts are provided by residues Lys-91, Trp-105, Lys-110, Gly-130, 152 to 154, 181 to 182, Met-196, Tyr-200, and Arg-315; these read DPS and IE.

This sequence belongs to the class I-like SAM-binding methyltransferase superfamily. CmoB family. In terms of assembly, homotetramer.

It catalyses the reaction carboxy-S-adenosyl-L-methionine + 5-hydroxyuridine(34) in tRNA = 5-carboxymethoxyuridine(34) in tRNA + S-adenosyl-L-homocysteine + H(+). Catalyzes carboxymethyl transfer from carboxy-S-adenosyl-L-methionine (Cx-SAM) to 5-hydroxyuridine (ho5U) to form 5-carboxymethoxyuridine (cmo5U) at position 34 in tRNAs. This chain is tRNA U34 carboxymethyltransferase, found in Vibrio vulnificus (strain CMCP6).